The sequence spans 235 residues: UPF0173 metal-dependent hydrolase mll0680 (235 aa).

It belongs to the UPF0173 family.

This Mesorhizobium japonicum (strain LMG 29417 / CECT 9101 / MAFF 303099) (Mesorhizobium loti (strain MAFF 303099)) protein is UPF0173 metal-dependent hydrolase mll0680.